The following is a 360-amino-acid chain: Peptide chain release factor 1 (360 aa).

An N5-methylglutamine modification is found at glutamine 234.

It belongs to the prokaryotic/mitochondrial release factor family. In terms of processing, methylated by PrmC. Methylation increases the termination efficiency of RF1.

It is found in the cytoplasm. Peptide chain release factor 1 directs the termination of translation in response to the peptide chain termination codons UAG and UAA. This is Peptide chain release factor 1 from Clostridium botulinum (strain Eklund 17B / Type B).